The sequence spans 526 residues: Keratin, type I cytoskeletal 10 (526 aa).

Residues 1–15 (MSVRYSSSKQYSSSR) are compositionally biased toward low complexity. The interval 1–29 (MSVRYSSSKQYSSSRSGGGGGGGSSLRIS) is disordered. Residues 1–126 (MSVRYSSSKQ…FGDGGLISGN (126 aa)) are head. Ser14, Ser16, Ser34, Ser45, Ser48, and Ser151 each carry phosphoserine. The interval 127-162 (QKITMQNLNDRLASYLDKVRALEESNYELEVKIKEW) is coil 1A. The IF rod domain occupies 127–441 (QKITMQNLND…SLLEGEGSSG (315 aa)). Residues 163–183 (YEKYGNSRQREPRDYSKYYQT) are linker 1. The segment at 184 to 275 (IDDLKNQIFN…KNHEEEMRDL (92 aa)) is coil 1B. The linker 12 stretch occupies residues 276-298 (QNVSTGDVNVEMNAAPGVDLTEL). Positions 299 to 437 (LNNMRSQYEQ…QTYRSLLEGE (139 aa)) are coil 2. Residues 438-526 (GSSGGGSYGG…GESSSKGPRY (89 aa)) form a tail region. The span at 458–505 (GGGGYGGGSSSGGYGGGSSSGGGHGGSSGGSYGGGSSSGGGHGGGSSS) shows a compositional bias: gly residues. Positions 458 to 526 (GGGGYGGGSS…GESSSKGPRY (69 aa)) are disordered. Residues 506–526 (GGHKSTTTGSVGESSSKGPRY) are compositionally biased toward low complexity.

The protein belongs to the intermediate filament family. In terms of assembly, heterotetramer of two type I and two type II keratins. Heterodimer with KRT1. Two heterodimers of KRT1 and KRT10 form a heterotetramer. The KRT10 subunit in the heterotetramer is probably disulfide-linked.

It localises to the secreted. Its subcellular location is the extracellular space. The protein localises to the cell surface. It is found in the cytoplasm. Plays a role in the establishment of the epidermal barrier on plantar skin. Involved in the maintenance of cell layer development and keratin filament bundles in suprabasal cells of the epithelium. This chain is Keratin, type I cytoskeletal 10 (KRT10), found in Bos taurus (Bovine).